The primary structure comprises 410 residues: Polyadenylation and cleavage factor homolog 5 (410 aa).

A compositionally biased stretch (polar residues) spans 1 to 17 (MASNGSFSAQRNANAGT). Positions 1–32 (MASNGSFSAQRNANAGTTMKRRNDNRGYGGGI) are disordered. Positions 191 to 214 (SKELTDLLSLLNNEKEKKTSEASN) form a coiled coil. The C2H2-type zinc-finger motif lies at 247–269 (RQCTSCGVRFKCQEEHSKHMDWH).

As to quaternary structure, forms a complex with cleavage and polyadenylation specificity factor (CPSF) subunits CSTF77, CLPS3, PCFS4 and PCFS1.

The protein resides in the nucleus. In Arabidopsis thaliana (Mouse-ear cress), this protein is Polyadenylation and cleavage factor homolog 5.